The primary structure comprises 294 residues: 1D-myo-inositol 2-acetamido-2-deoxy-alpha-D-glucopyranoside deacetylase (294 aa).

Zn(2+) contacts are provided by H15, D18, and H150.

This sequence belongs to the MshB deacetylase family. It depends on Zn(2+) as a cofactor.

The catalysed reaction is 1D-myo-inositol 2-acetamido-2-deoxy-alpha-D-glucopyranoside + H2O = 1D-myo-inositol 2-amino-2-deoxy-alpha-D-glucopyranoside + acetate. In terms of biological role, catalyzes the deacetylation of 1D-myo-inositol 2-acetamido-2-deoxy-alpha-D-glucopyranoside (GlcNAc-Ins) in the mycothiol biosynthesis pathway. This chain is 1D-myo-inositol 2-acetamido-2-deoxy-alpha-D-glucopyranoside deacetylase, found in Streptomyces avermitilis (strain ATCC 31267 / DSM 46492 / JCM 5070 / NBRC 14893 / NCIMB 12804 / NRRL 8165 / MA-4680).